The chain runs to 508 residues: Endoglucanase 6 (508 aa).

Positions Met1–Gly33 are cleaved as a signal peptide. Catalysis depends on Asp89, which acts as the Nucleophile. Residues His419, Asp471, and Glu480 contribute to the active site.

This sequence belongs to the glycosyl hydrolase 9 (cellulase E) family.

Its subcellular location is the secreted. It catalyses the reaction Endohydrolysis of (1-&gt;4)-beta-D-glucosidic linkages in cellulose, lichenin and cereal beta-D-glucans.. The polypeptide is Endoglucanase 6 (Oryza sativa subsp. japonica (Rice)).